We begin with the raw amino-acid sequence, 198 residues long: Proteasome subunit beta type-2 (198 aa).

It belongs to the peptidase T1B family. As to quaternary structure, the 26S proteasome consists of a 20S proteasome core and two 19S regulatory subunits. The 20S proteasome core is composed of 28 subunits that are arranged in four stacked rings, resulting in a barrel-shaped structure. The two end rings are each formed by seven alpha subunits, and the two central rings are each formed by seven beta subunits. The catalytic chamber with the active sites is on the inside of the barrel.

It localises to the cytoplasm. Its subcellular location is the nucleus. Its function is as follows. Non-catalytic component of the proteasome, a multicatalytic proteinase complex which is characterized by its ability to cleave peptides with Arg, Phe, Tyr, Leu, and Glu adjacent to the leaving group at neutral or slightly basic pH. The proteasome has an ATP-dependent proteolytic activity. This is Proteasome subunit beta type-2 (psmB2) from Dictyostelium discoideum (Social amoeba).